Here is a 101-residue protein sequence, read N- to C-terminus: Putative antitoxin HigA2 (101 aa).

One can recognise an HTH cro/C1-type domain in the interval 35 to 90 (LRELRAAQSLTQVQVAALAHIRQSRVSSIENGDIGSAQVNTLRKYVSALGGELDIT). The H-T-H motif DNA-binding region spans 46 to 65 (QVQVAALAHIRQSRVSSIEN).

Its function is as follows. Putative antitoxin component of a type II toxin-antitoxin (TA) system. Its cognate toxin would be HigB2. The chain is Putative antitoxin HigA2 from Mycobacterium tuberculosis (strain ATCC 25618 / H37Rv).